We begin with the raw amino-acid sequence, 185 residues long: Ribosome-recycling factor (185 aa).

The tract at residues 140-166 is disordered; it reads KRQEKDGDITEDEQRSLEKQVQKVTDD.

It belongs to the RRF family.

Its subcellular location is the cytoplasm. Its function is as follows. Responsible for the release of ribosomes from messenger RNA at the termination of protein biosynthesis. May increase the efficiency of translation by recycling ribosomes from one round of translation to another. The polypeptide is Ribosome-recycling factor (Lactobacillus johnsonii (strain CNCM I-12250 / La1 / NCC 533)).